Reading from the N-terminus, the 140-residue chain is ATP synthase epsilon chain (140 aa).

It belongs to the ATPase epsilon chain family. In terms of assembly, F-type ATPases have 2 components, CF(1) - the catalytic core - and CF(0) - the membrane proton channel. CF(1) has five subunits: alpha(3), beta(3), gamma(1), delta(1), epsilon(1). CF(0) has three main subunits: a, b and c.

It is found in the cell inner membrane. In terms of biological role, produces ATP from ADP in the presence of a proton gradient across the membrane. This chain is ATP synthase epsilon chain, found in Herminiimonas arsenicoxydans.